Here is an 844-residue protein sequence, read N- to C-terminus: Meiotically up-regulated gene 61 protein (844 aa).

Disordered regions lie at residues 333 to 354 and 384 to 415; these read ENNSFSWTHPKKNSSSPLPQSQ and NFGLEASNTSTPEKKKFDSQKPDDDSVNEISS. The span at 384–394 shows a compositional bias: polar residues; that stretch reads NFGLEASNTST. Positions 395–407 are enriched in basic and acidic residues; sequence PEKKKFDSQKPDD. A helical transmembrane segment spans residues 459–479; the sequence is VVNSLWLVLLVVPLLGFVGFW. 605-612 provides a ligand contact to ATP; the sequence is AKNLNGKS. A helical transmembrane segment spans residues 705-725; sequence VISCWRIYLLIGILAAITGTV.

As to quaternary structure, interacts with sad1.

The protein resides in the endoplasmic reticulum membrane. It is found in the nucleus membrane. In terms of biological role, required for correct meiotic chromosome segregation. This is Meiotically up-regulated gene 61 protein (mug61) from Schizosaccharomyces pombe (strain 972 / ATCC 24843) (Fission yeast).